Consider the following 372-residue polypeptide: Aminomethyltransferase (372 aa).

The protein belongs to the GcvT family. In terms of assembly, the glycine cleavage system is composed of four proteins: P, T, L and H.

It carries out the reaction N(6)-[(R)-S(8)-aminomethyldihydrolipoyl]-L-lysyl-[protein] + (6S)-5,6,7,8-tetrahydrofolate = N(6)-[(R)-dihydrolipoyl]-L-lysyl-[protein] + (6R)-5,10-methylene-5,6,7,8-tetrahydrofolate + NH4(+). The glycine cleavage system catalyzes the degradation of glycine. The protein is Aminomethyltransferase of Streptomyces avermitilis (strain ATCC 31267 / DSM 46492 / JCM 5070 / NBRC 14893 / NCIMB 12804 / NRRL 8165 / MA-4680).